The chain runs to 542 residues: Chaperonin GroEL (542 aa).

Residues 29–32 (TLGP), 86–90 (DGTTT), G413, and D493 each bind ATP.

It belongs to the chaperonin (HSP60) family. In terms of assembly, forms a cylinder of 14 subunits composed of two heptameric rings stacked back-to-back. Interacts with the co-chaperonin GroES.

The protein resides in the cytoplasm. The enzyme catalyses ATP + H2O + a folded polypeptide = ADP + phosphate + an unfolded polypeptide.. Together with its co-chaperonin GroES, plays an essential role in assisting protein folding. The GroEL-GroES system forms a nano-cage that allows encapsulation of the non-native substrate proteins and provides a physical environment optimized to promote and accelerate protein folding. The polypeptide is Chaperonin GroEL (Elusimicrobium minutum (strain Pei191)).